The primary structure comprises 159 residues: Voltage-dependent N-type calcium channel subunit alpha-1B (159 aa).

A helical membrane pass occupies residues 1–5 (LVTEI). The IV repeat unit spans residues 1-159 (LVTEIADTDN…LMLNLFVAVI (159 aa)). Residues 6–13 (ADTDNFIN) lie on the Extracellular side of the membrane. An N-linked (GlcNAc...) asparagine glycan is attached at Asn-13. The chain crosses the membrane as a helical span at residues 14–32 (LSFLRLFRAARLIKLLRQG). Residues 33-51 (YTIRILLWTFVQSFKALPY) are Cytoplasmic-facing. Residues 52–71 (VCLLIAMLFFIYAIIGMQVF) form a helical membrane-spanning segment. Residues 72 to 135 (GNIALNDETS…LTKNECGSDF (64 aa)) lie on the Extracellular side of the membrane. The helical transmembrane segment at 136-155 (AYFYFVSFIFLCSFLMLNLF) threads the bilayer. The Cytoplasmic segment spans residues 156-159 (VAVI).

It belongs to the calcium channel alpha-1 subunit (TC 1.A.1.11) family. CACNA1B subfamily. As to quaternary structure, multisubunit complex consisting of alpha-1, alpha-2, beta and delta subunits in a 1:1:1:1 ratio. The channel activity is directed by the pore-forming and voltage-sensitive alpha-1 subunit. In many cases, this subunit is sufficient to generate voltage-sensitive calcium channel activity. The auxiliary subunits beta and alpha-2/delta linked by a disulfide bridge regulate the channel activity. Interacts with RIMBP2. In terms of processing, phosphorylated in vitro by CaM-kinase II, PKA, PKC and CGPK.

The protein localises to the membrane. The enzyme catalyses Ca(2+)(in) = Ca(2+)(out). Voltage-sensitive calcium channels (VSCC) mediate the entry of calcium ions into excitable cells and are also involved in a variety of calcium-dependent processes, including muscle contraction, hormone or neurotransmitter release, gene expression, cell motility, cell division and cell death. This alpha-1B subunit gives rise to N-type calcium currents. N-type calcium channels belong to the 'high-voltage activated' (HVA) group. They are involved in pain signaling. Calcium channels containing alpha-1B subunit may play a role in directed migration of immature neurons. Mediates Ca(2+) release probability at hippocampal neuronal soma and synaptic terminals. This is Voltage-dependent N-type calcium channel subunit alpha-1B (CACNA1B) from Gallus gallus (Chicken).